The sequence spans 112 residues: Large ribosomal subunit protein P1 (112 aa).

The interval 80–112 (AAAAPAAESKKEEKKKEEESDQSDDDMGFGLFD) is disordered. The segment covering 87-97 (ESKKEEKKKEE) has biased composition (basic and acidic residues). Phosphoserine is present on residues S99 and S102.

Belongs to the eukaryotic ribosomal protein P1/P2 family. In terms of assembly, P1 and P2 exist as dimers at the large ribosomal subunit.

In terms of biological role, plays an important role in the elongation step of protein synthesis. The polypeptide is Large ribosomal subunit protein P1 (RpLP1) (Drosophila melanogaster (Fruit fly)).